Consider the following 172-residue polypeptide: Trypsin inhibitor DE-3 (172 aa).

Intrachain disulfides connect Cys39-Cys83 and Cys132-Cys139.

It belongs to the protease inhibitor I3 (leguminous Kunitz-type inhibitor) family.

Inhibition of trypsin. The polypeptide is Trypsin inhibitor DE-3 (Erythrina variegata (Indian coral tree)).